Here is a 319-residue protein sequence, read N- to C-terminus: Acetyl-coenzyme A carboxylase carboxyl transferase subunit alpha (319 aa).

In terms of domain architecture, CoA carboxyltransferase C-terminal spans Asn-35–Asp-296.

Belongs to the AccA family. In terms of assembly, acetyl-CoA carboxylase is a heterohexamer composed of biotin carboxyl carrier protein (AccB), biotin carboxylase (AccC) and two subunits each of ACCase subunit alpha (AccA) and ACCase subunit beta (AccD).

The protein resides in the cytoplasm. The enzyme catalyses N(6)-carboxybiotinyl-L-lysyl-[protein] + acetyl-CoA = N(6)-biotinyl-L-lysyl-[protein] + malonyl-CoA. The protein operates within lipid metabolism; malonyl-CoA biosynthesis; malonyl-CoA from acetyl-CoA: step 1/1. Functionally, component of the acetyl coenzyme A carboxylase (ACC) complex. First, biotin carboxylase catalyzes the carboxylation of biotin on its carrier protein (BCCP) and then the CO(2) group is transferred by the carboxyltransferase to acetyl-CoA to form malonyl-CoA. The protein is Acetyl-coenzyme A carboxylase carboxyl transferase subunit alpha of Edwardsiella ictaluri (strain 93-146).